Consider the following 140-residue polypeptide: Profilin-1 (140 aa).

Alanine 2 carries the N-acetylalanine modification. The residue at position 28 (serine 28) is a Phosphoserine. Lysine 54 is covalently cross-linked (Glycyl lysine isopeptide (Lys-Gly) (interchain with G-Cter in SUMO2); alternate). Residue lysine 54 forms a Glycyl lysine isopeptide (Lys-Gly) (interchain with G-Cter in ubiquitin); alternate linkage. Phosphoserine is present on residues serine 57 and serine 85. An N6-acetyllysine mark is found at lysine 105 and lysine 108. A Phosphotyrosine modification is found at tyrosine 129. The residue at position 138 (serine 138) is a Phosphoserine; by ROCK1.

Belongs to the profilin family. In terms of assembly, found in a complex with XPO6, Ran, ACTB and PFN1. Interacts with ACTB. Interacts with VASP. Interacts with HTT. Interacts with SH3BGRL. Occurs in many kinds of cells as a complex with monomeric actin in a 1:1 ratio. Interacts with ACTMAP. Phosphorylation at Ser-138 reduces its affinity for G-actin and blocks its interaction with HTT, reducing its ability to inhibit androgen receptor (AR) and HTT aggregation. In terms of tissue distribution, expressed in epididymis (at protein level).

Its subcellular location is the cytoplasm. It localises to the cytoskeleton. Its function is as follows. Binds to actin and affects the structure of the cytoskeleton. At high concentrations, profilin prevents the polymerization of actin, whereas it enhances it at low concentrations. By binding to PIP2, it inhibits the formation of IP3 and DG. Inhibits androgen receptor (AR) and HTT aggregation and binding of G-actin is essential for its inhibition of AR. This chain is Profilin-1 (PFN1), found in Homo sapiens (Human).